We begin with the raw amino-acid sequence, 187 residues long: ATP synthase subunit b 2 (187 aa).

The chain crosses the membrane as a helical span at residues T32–M52.

Belongs to the ATPase B chain family. In terms of assembly, F-type ATPases have 2 components, F(1) - the catalytic core - and F(0) - the membrane proton channel. F(1) has five subunits: alpha(3), beta(3), gamma(1), delta(1), epsilon(1). F(0) has three main subunits: a(1), b(2) and c(10-14). The alpha and beta chains form an alternating ring which encloses part of the gamma chain. F(1) is attached to F(0) by a central stalk formed by the gamma and epsilon chains, while a peripheral stalk is formed by the delta and b chains.

The protein resides in the cell inner membrane. In terms of biological role, f(1)F(0) ATP synthase produces ATP from ADP in the presence of a proton or sodium gradient. F-type ATPases consist of two structural domains, F(1) containing the extramembraneous catalytic core and F(0) containing the membrane proton channel, linked together by a central stalk and a peripheral stalk. During catalysis, ATP synthesis in the catalytic domain of F(1) is coupled via a rotary mechanism of the central stalk subunits to proton translocation. Functionally, component of the F(0) channel, it forms part of the peripheral stalk, linking F(1) to F(0). The b'-subunit is a diverged and duplicated form of b found in plants and photosynthetic bacteria. The chain is ATP synthase subunit b 2 (atpF2) from Methylobacterium sp. (strain 4-46).